Reading from the N-terminus, the 206-residue chain is Large ribosomal subunit protein uL4 (206 aa).

A disordered region spans residues Lys44–Ser80.

Belongs to the universal ribosomal protein uL4 family. As to quaternary structure, part of the 50S ribosomal subunit.

Its function is as follows. One of the primary rRNA binding proteins, this protein initially binds near the 5'-end of the 23S rRNA. It is important during the early stages of 50S assembly. It makes multiple contacts with different domains of the 23S rRNA in the assembled 50S subunit and ribosome. Forms part of the polypeptide exit tunnel. This Oleidesulfovibrio alaskensis (strain ATCC BAA-1058 / DSM 17464 / G20) (Desulfovibrio alaskensis) protein is Large ribosomal subunit protein uL4.